The primary structure comprises 160 residues: Nascent polypeptide-associated complex subunit alpha (160 aa).

Residues 10 to 75 (TKGEKKTREA…HSFDDIASRL (66 aa)) enclose the NAC-A/B domain. Residues 120–159 (VNPKDVEVVMKETKASREKVVETLIATKNDLVSAVLELTT) form the UBA domain.

This sequence belongs to the NAC-alpha family. As to quaternary structure, part of the nascent polypeptide-associated complex (NAC), consisting of nacA and nacB.

It is found in the cytoplasm. The protein localises to the nucleus. Component of the nascent polypeptide-associated complex (NAC), a dynamic component of the ribosomal exit tunnel, protecting the emerging polypeptides from interaction with other cytoplasmic proteins to ensure appropriate nascent protein targeting. The NAC complex also promotes mitochondrial protein import by enhancing productive ribosome interactions with the outer mitochondrial membrane and blocks the inappropriate interaction of ribosomes translating non-secretory nascent polypeptides with translocation sites in the membrane of the endoplasmic reticulum. May also be involved in transcription regulation. This chain is Nascent polypeptide-associated complex subunit alpha (nacA), found in Dictyostelium discoideum (Social amoeba).